Reading from the N-terminus, the 275-residue chain is Polyamine aminopropyltransferase (275 aa).

One can recognise a PABS domain in the interval 2–235 (ELWFTEKQTK…GLWTFTIGSK (234 aa)). Gln31 contacts S-methyl-5'-thioadenosine. Residues His62 and Asp86 each coordinate spermidine. S-methyl-5'-thioadenosine-binding positions include Glu106 and 137–138 (DG). Asp155 functions as the Proton acceptor in the catalytic mechanism. Residue 155-158 (DSTE) coordinates spermidine. Pro162 provides a ligand contact to S-methyl-5'-thioadenosine.

The protein belongs to the spermidine/spermine synthase family. As to quaternary structure, homodimer or homotetramer.

Its subcellular location is the cytoplasm. The enzyme catalyses S-adenosyl 3-(methylsulfanyl)propylamine + putrescine = S-methyl-5'-thioadenosine + spermidine + H(+). It functions in the pathway amine and polyamine biosynthesis; spermidine biosynthesis; spermidine from putrescine: step 1/1. Its function is as follows. Catalyzes the irreversible transfer of a propylamine group from the amino donor S-adenosylmethioninamine (decarboxy-AdoMet) to putrescine (1,4-diaminobutane) to yield spermidine. This Bacillus cereus (strain ATCC 10987 / NRS 248) protein is Polyamine aminopropyltransferase.